The primary structure comprises 152 residues: 17.1 kDa class II heat shock protein (152 aa).

A sHSP domain is found at 36-152 (DAKAMAATPA…KPKTIQVKVA (117 aa)).

The protein belongs to the small heat shock protein (HSP20) family.

The protein localises to the cytoplasm. This Pisum sativum (Garden pea) protein is 17.1 kDa class II heat shock protein (HSP17.7).